We begin with the raw amino-acid sequence, 93 residues long: Beta-defensin 128 (93 aa).

Residues 1–18 form the signal peptide; sequence MKLFLVLIILLFEVLTDG. 3 disulfide bridges follow: Cys-24–Cys-52, Cys-32–Cys-46, and Cys-36–Cys-53.

The protein belongs to the beta-defensin family.

The protein localises to the secreted. Functionally, has antibacterial activity. In Homo sapiens (Human), this protein is Beta-defensin 128 (DEFB128).